We begin with the raw amino-acid sequence, 512 residues long: Ammonium transporter 2 (512 aa).

Topologically, residues 1-47 (MSSVNSIPTATSTVYISVLPATATPSGGSGGNVLHEDLNKFYDYGNT) are extracellular. The chain crosses the membrane as a helical span at residues 48 to 68 (SWILACTPLCLIMVPGVAFFY). The Cytoplasmic portion of the chain corresponds to 69-77 (SGLARRKNT). The helical transmembrane segment at 78 to 98 (LALIMLSMLGLCVSFFQWYFW) threads the bilayer. Over 99–137 (GYSLAFSQTGTSGYIGNLRHFAFIRTLADYSPGSNNIPE) the chain is Extracellular. Residues 138–158 (LVFANFQGMFAAITVALFTGA) traverse the membrane as a helical segment. Residues 159-167 (AAERGRIGP) are Cytoplasmic-facing. A helical membrane pass occupies residues 168–188 (MLIITFVWLTVVYCPIACWIW). Residues 189-201 (NPNGWAFKFGVYD) lie on the Extracellular side of the membrane. Residues 202 to 222 (FAGGGPVEVGSGFAALAYTVC) form a helical membrane-spanning segment. At 223 to 238 (LGRRSKFVEEQFRPHS) the chain is on the cytoplasmic side. A helical membrane pass occupies residues 239 to 259 (VLNVVLGTSLLWFGWLGFNGG). Over 260–267 (SAYGSNLR) the chain is Extracellular. Residues 268 to 288 (AAMAITNTNLAGAVAGLVWVI) traverse the membrane as a helical segment. Over 289–300 (YDYIFRTRKWST) the chain is Cytoplasmic. Residues 301-321 (IGFCSGVVAGLVAATPCAGFV) traverse the membrane as a helical segment. A topological domain (extracellular) is located at residue Ser-322. The chain crosses the membrane as a helical span at residues 323 to 343 (PHASLAIGAITGLCCNWAIKL). Residues 344–354 (KSHMRIDDAMD) are Cytoplasmic-facing. A helical membrane pass occupies residues 355-375 (IFAIHGVAGFVGTFLNGLFAV). Topologically, residues 376–406 (DYIAAMDGIYVGENKIRGGWFDHHWRQLGLQ) are extracellular. A helical membrane pass occupies residues 407-427 (MAYICAVGAYDFVVTFIILFI). Residues 428-512 (TDKIPYLQLR…TNPLELGLTI (85 aa)) lie on the Cytoplasmic side of the membrane.

The protein belongs to the ammonia transporter channel (TC 1.A.11.2) family.

The protein resides in the membrane. In terms of biological role, transporter for ammonium to use as a nitrogen source. This Schizosaccharomyces pombe (strain 972 / ATCC 24843) (Fission yeast) protein is Ammonium transporter 2 (amt2).